The chain runs to 456 residues: Signal recognition particle receptor FtsY (456 aa).

A compositionally biased stretch (basic and acidic residues) spans 1-26 (MFDGLKKKLNRFRNDVEETAEEKAEA). The tract at residues 1–163 (MFDGLKKKLN…DEDDSSGPGR (163 aa)) is disordered. The span at 27–39 (AADEAESDADAEA) shows a compositional bias: acidic residues. Low complexity predominate over residues 40–62 (ESAPADTDNAAVEPEASEPAAAD). Residues 63–81 (PDADAVGDADAGSEADAVD) are compositionally biased toward acidic residues. Residues 82–97 (AADAPADAESSSAAVE) show a composition bias toward low complexity. Over residues 112–134 (PDSEVDAGADTGDEPSGEPTADE) the composition is skewed to acidic residues. Residues 265–272 (GINGVGKT), 347–351 (DTAGR), and 405–408 (TKAD) each bind GTP.

Belongs to the GTP-binding SRP family. FtsY subfamily. In terms of assembly, part of the signal recognition particle protein translocation system, which is composed of SRP and FtsY.

The protein resides in the cell membrane. The protein localises to the cytoplasm. The catalysed reaction is GTP + H2O = GDP + phosphate + H(+). Its function is as follows. Involved in targeting and insertion of nascent membrane proteins into the cytoplasmic membrane. Acts as a receptor for the complex formed by the signal recognition particle (SRP) and the ribosome-nascent chain (RNC). This Haloferax volcanii (strain ATCC 29605 / DSM 3757 / JCM 8879 / NBRC 14742 / NCIMB 2012 / VKM B-1768 / DS2) (Halobacterium volcanii) protein is Signal recognition particle receptor FtsY.